The chain runs to 168 residues: 2-C-methyl-D-erythritol 2,4-cyclodiphosphate synthase (168 aa).

A divalent metal cation contacts are provided by Asp13 and His15. 4-CDP-2-C-methyl-D-erythritol 2-phosphate contacts are provided by residues 13–15 (DVH) and 39–40 (HS). Residue His47 participates in a divalent metal cation binding. Residues 61–63 (DIG), 66–70 (FPDTD), Phe144, and Arg147 contribute to the 4-CDP-2-C-methyl-D-erythritol 2-phosphate site.

This sequence belongs to the IspF family. In terms of assembly, homotrimer. Requires a divalent metal cation as cofactor.

It carries out the reaction 4-CDP-2-C-methyl-D-erythritol 2-phosphate = 2-C-methyl-D-erythritol 2,4-cyclic diphosphate + CMP. The protein operates within isoprenoid biosynthesis; isopentenyl diphosphate biosynthesis via DXP pathway; isopentenyl diphosphate from 1-deoxy-D-xylulose 5-phosphate: step 4/6. Involved in the biosynthesis of isopentenyl diphosphate (IPP) and dimethylallyl diphosphate (DMAPP), two major building blocks of isoprenoid compounds. Catalyzes the conversion of 4-diphosphocytidyl-2-C-methyl-D-erythritol 2-phosphate (CDP-ME2P) to 2-C-methyl-D-erythritol 2,4-cyclodiphosphate (ME-CPP) with a corresponding release of cytidine 5-monophosphate (CMP). The protein is 2-C-methyl-D-erythritol 2,4-cyclodiphosphate synthase of Ralstonia nicotianae (strain ATCC BAA-1114 / GMI1000) (Ralstonia solanacearum).